A 457-amino-acid polypeptide reads, in one-letter code: MVKDLVGYRFYPTGEELINHYLKNKILGKTWLVDEAISEINICSYDPIYLPSLSKIKSDDPVWYFFCPKEYTSAKKKVTKRTTSSGYWKATGVDRKIKDKRGNRGEIGIKKTLVYYEGRVPKGVWTPWVMHEYHITCLPQDQRNYVICQVMYKGEDGDVPSGGNNSSEPSQSLVSDSNTVRATSPTALEFEKPGQENFFGMSVDDLGTPKNEQEDFSLWDVLDPDMLFSDNNNPTVHPQAPHLTPNDDEFLGGLRHVNREQVEYLFANEDFISRPTLSMTENRNDHRPKKALSGIIVDYSSDSNSDAESISATSYQGTSSPGDDSVGSSNRQFLQTGGDEILSSCNDLQTYGEPSISSSTRQSQLTRSIIRPKQEVKQDTSRAVDSDTSIDKESSMVKTEKKSWFITEEAMERNRNNPRYIYLMRMIIGFILLLALISNIISVLQNLNPAMKFDRER.

The NAC domain occupies Asp-4–Lys-153. Residues Ile-107 to Val-159 mediate DNA binding. 2 disordered regions span residues Asp-158–Val-180 and Asp-302–Gln-332. The segment covering Gly-162–Val-180 has biased composition (polar residues). Residues Asp-302–Ser-311 show a composition bias toward low complexity. A compositionally biased stretch (polar residues) spans Ala-312 to Gln-332. Residues Ile-421–Ile-441 form a helical membrane-spanning segment.

It localises to the membrane. The protein resides in the nucleus. In terms of biological role, transcription activator activated by proteolytic cleavage through regulated intramembrane proteolysis (RIP). Involved in salt stress response during seed germination and seedling growth. Binds the auxin-responsive IAA30 gene promoter and may serve as a molecular link that interconnects a developmental feedback loop of auxin signaling with a salt signal transduction pathway during seed germination. This chain is NAC domain-containing protein 69 (NAC69), found in Arabidopsis thaliana (Mouse-ear cress).